Reading from the N-terminus, the 542-residue chain is uncharacterized protein (542 aa).

Residues 256–275 are disordered; it reads KKSTTTSSPPITTTHLSKPE. Positions 258 to 269 are enriched in low complexity; the sequence is STTTSSPPITTT.

This is an uncharacterized protein from Caenorhabditis elegans.